The sequence spans 76 residues: Omega-conotoxin MoVIA (76 aa).

The first 22 residues, 1 to 22, serve as a signal peptide directing secretion; it reads MKLTCVVIVAVLFLTACQLITA. The propeptide occupies 23–45; that stretch reads DDSRSTQRHRALRSTTKLSMSTR. 3 disulfide bridges follow: Cys-46-Cys-61, Cys-53-Cys-64, and Cys-60-Cys-71. Pro-49 and Pro-55 each carry hydroxyproline.

The protein belongs to the conotoxin O1 superfamily. As to expression, expressed by the venom duct.

It localises to the secreted. Functionally, omega-conotoxins act at presynaptic membranes, they bind and block voltage-gated calcium channels (Cav). This toxin potently blocks mammalian N-type calcium channels (Cav2.2/CACNA1B) (IC(50)=330 nM on human channels). It is 9-fold more potent in displacing radiolabeled omega-conotoxin GVIA from fish brain membranes than from human SH-SY5Y cells. Its function is as follows. Omega-conotoxins act at presynaptic membranes, they bind and block voltage-gated calcium channels (Cav). This toxin potently blocks mammalian N-type calcium channels (Cav2.2/CACNA1B) (IC(50)=600 nM on human channels). It is 60-fold more potent in displacing radiolabeled omega-conotoxin GVIA from fish brain membranes than from human SH-SY5Y cells. In vivo, when tested on rat neuropathic pain model, this toxin shows an analgesic activity. This is Omega-conotoxin MoVIA from Conus moncuri (Sea snail).